The chain runs to 1509 residues: Dynein axonemal assembly factor 1 homolog (1509 aa).

LRR repeat units follow at residues 34-56 (RLND…EEYT), 57-78 (ELKC…EKLS), 79-100 (KLKC…EPCR), 101-122 (ELDT…GTNI), 125-146 (VLNT…SDLV), and 150-171 (TLSV…KIFE). An LRRCT domain is found at 185 to 223 (PVVSRLPQYRKTLILACKELTYLDSRPVFPRDRACAEAW). Disordered regions lie at residues 252–280 (CTIR…DDTC), 306–327 (HPTS…ATSS), 962–1008 (SGDL…DSKN), and 1103–1122 (TLQT…KLRN). Residues 309-318 (SESGASTSSS) show a composition bias toward low complexity. Positions 978–990 (SESEDYDTADDEY) are enriched in acidic residues. The span at 1103–1112 (TLQTSFSTVG) shows a compositional bias: polar residues.

Belongs to the DNAAF1 family.

It is found in the cell projection. The protein resides in the cilium. Cilium-specific protein required for cilia structures. This Drosophila yakuba (Fruit fly) protein is Dynein axonemal assembly factor 1 homolog (dtr).